A 463-amino-acid polypeptide reads, in one-letter code: MLPARVRLLTPHLLLVLVQLSPAGGHRTTGPRFLISDRDPPCNPHCPRTQPKPICASDGRSYESMCEYQRAKCRDPALAVVHRGRCKDAGQSKCRLERAQALEQAKKPQEAVFVPECGEDGSFTQVQCHTYTGYCWCVTPDGKPISGSSVQNKTPVCSGPVTDKPLSQGNSGRKVSFRFFLTLNSDDGSKPTPTMETQPVFDGDEITAPTLWIKHLVIKDSKLNNTNVRNSEKVHSCDQERQSALEEARQNPREGIVIPECAPGGLYKPVQCHQSTGYCWCVLVDTGRPLPGTSTRYVMPSCESDARAKSVEADDPFKDRELPGCPEGKKMEFITSLLDALTTDMVQAINSAAPTGGGRFSEPDPSHTLEERVAHWYFSQLDSNSSDDINKREMKPFKRYVKKKAKPKKCARRFTDYCDLNKDKVISLPELKGCLGVSKEGGSLGSFPQGKRAGTNPFIGRLV.

Residues 1-25 (MLPARVRLLTPHLLLVLVQLSPAGG) form the signal peptide. The Kazal-like domain maps to 36-88 (SDRDPPCNPHCPRTQPKPICASDGRSYESMCEYQRAKCRDPALAVVHRGRCKD). 6 disulfides stabilise this stretch: cysteine 42/cysteine 73, cysteine 46/cysteine 66, cysteine 55/cysteine 86, cysteine 94/cysteine 117, cysteine 128/cysteine 135, and cysteine 137/cysteine 157. One can recognise a Thyroglobulin type-1 1 domain in the interval 91 to 157 (QSKCRLERAQ…SSVQNKTPVC (67 aa)). An N-linked (GlcNAc...) asparagine glycan is attached at asparagine 224. One can recognise a Thyroglobulin type-1 2 domain in the interval 234–302 (VHSCDQERQS…TSTRYVMPSC (69 aa)). 3 cysteine pairs are disulfide-bonded: cysteine 237-cysteine 261, cysteine 272-cysteine 279, and cysteine 281-cysteine 302. EF-hand domains are found at residues 369–404 (LEERVAHWYFSQLDSNSSDDINKREMKPFKRYVKKK) and 406–441 (KPKKCARRFTDYCDLNKDKVISLPELKGCLGVSKEG). Ca(2+)-binding residues include aspartate 382, asparagine 384, serine 386, aspartate 388, glutamate 393, aspartate 419, asparagine 421, aspartate 423, and glutamate 430. N-linked (GlcNAc...) asparagine glycosylation occurs at asparagine 384.

Post-translationally, glycosylated. In terms of tissue distribution, widely expressed in many tissues with a strongest signal in ovary.

It localises to the secreted. The protein localises to the extracellular space. The protein resides in the extracellular matrix. It is found in the basement membrane. Its function is as follows. Probable regulator of osteoblast differentiation. Plays essential roles in both eye and limb development. This chain is SPARC-related modular calcium-binding protein 1 (Smoc1), found in Mus musculus (Mouse).